We begin with the raw amino-acid sequence, 355 residues long: MSFSDNLVKILDKYENLGKKLSSGIIGDEFVKASKEYAELEDVVVKIKQYNKAKSELEEANNFRLEMALDNATLEMIDNEIHTLENLLPKLERAVRISLLPKDEADSKSAIIEVRAGSGGEEAALFAAVLFNMYQRYSEFKGWRFEILAISDTGIGGYKEASASIKGKDVFSKLKFESGVHRVQRIPETESQGRIHTSAATVAVLPEAEGIDIKIEDKDLRIDTYRASGAGGQHVNTTDSAVRITHIPTGITVALQDEKSQHKNKAKALKILRARLYEEKRRQKEQERSDSRRGQVGSGDRSERIRTYNFPQGRVSDHRINLTLYKIDEVVKHGQLDEFIEALIANDEAKKLSEL.

Position 233 is an N5-methylglutamine (Q233). Over residues 280–293 (KRRQKEQERSDSRR) the composition is skewed to basic and acidic residues. Residues 280-310 (KRRQKEQERSDSRRGQVGSGDRSERIRTYNF) are disordered.

It belongs to the prokaryotic/mitochondrial release factor family. Post-translationally, methylated by PrmC. Methylation increases the termination efficiency of RF1.

Its subcellular location is the cytoplasm. Peptide chain release factor 1 directs the termination of translation in response to the peptide chain termination codons UAG and UAA. The chain is Peptide chain release factor 1 (prfA) from Rickettsia prowazekii (strain Madrid E).